Here is a 103-residue protein sequence, read N- to C-terminus: NADH-quinone oxidoreductase subunit K (103 aa).

Transmembrane regions (helical) follow at residues 6-26 (LAHY…GIFL), 32-52 (IVLL…FVAF), and 63-83 (VFVF…LAIL).

This sequence belongs to the complex I subunit 4L family. In terms of assembly, NDH-1 is composed of 14 different subunits. Subunits NuoA, H, J, K, L, M, N constitute the membrane sector of the complex.

The protein localises to the cell inner membrane. It carries out the reaction a quinone + NADH + 5 H(+)(in) = a quinol + NAD(+) + 4 H(+)(out). Functionally, NDH-1 shuttles electrons from NADH, via FMN and iron-sulfur (Fe-S) centers, to quinones in the respiratory chain. The immediate electron acceptor for the enzyme in this species is believed to be ubiquinone. Couples the redox reaction to proton translocation (for every two electrons transferred, four hydrogen ions are translocated across the cytoplasmic membrane), and thus conserves the redox energy in a proton gradient. The sequence is that of NADH-quinone oxidoreductase subunit K from Ralstonia pickettii (strain 12D).